Here is a 228-residue protein sequence, read N- to C-terminus: Imidazole glycerol phosphate synthase subunit HisH (228 aa).

Residues 4-218 form the Glutamine amidotransferase type-1 domain; the sequence is DIAVVDYGMG…VTWNPGEHAS (215 aa). The Nucleophile role is filled by cysteine 83. Residues histidine 193 and glutamate 195 contribute to the active site.

Heterodimer of HisH and HisF.

The protein localises to the cytoplasm. The enzyme catalyses 5-[(5-phospho-1-deoxy-D-ribulos-1-ylimino)methylamino]-1-(5-phospho-beta-D-ribosyl)imidazole-4-carboxamide + L-glutamine = D-erythro-1-(imidazol-4-yl)glycerol 3-phosphate + 5-amino-1-(5-phospho-beta-D-ribosyl)imidazole-4-carboxamide + L-glutamate + H(+). The catalysed reaction is L-glutamine + H2O = L-glutamate + NH4(+). Its pathway is amino-acid biosynthesis; L-histidine biosynthesis; L-histidine from 5-phospho-alpha-D-ribose 1-diphosphate: step 5/9. Functionally, IGPS catalyzes the conversion of PRFAR and glutamine to IGP, AICAR and glutamate. The HisH subunit catalyzes the hydrolysis of glutamine to glutamate and ammonia as part of the synthesis of IGP and AICAR. The resulting ammonia molecule is channeled to the active site of HisF. This Thiobacillus denitrificans (strain ATCC 25259 / T1) protein is Imidazole glycerol phosphate synthase subunit HisH.